The sequence spans 299 residues: Aliphatic sulfonates import ATP-binding protein SsuB (299 aa).

In terms of domain architecture, ABC transporter spans 36–257 (LHVQQVIKRY…QHGSAAFAQI (222 aa)). 68 to 75 (GRSGCGKS) lines the ATP pocket.

Belongs to the ABC transporter superfamily. Aliphatic sulfonates importer (TC 3.A.1.17.2) family. The complex is composed of two ATP-binding proteins (SsuB), two transmembrane proteins (SsuC) and a solute-binding protein (SsuA).

The protein localises to the cell inner membrane. The enzyme catalyses ATP + H2O + aliphatic sulfonate-[sulfonate-binding protein]Side 1 = ADP + phosphate + aliphatic sulfonateSide 2 + [sulfonate-binding protein]Side 1.. Its function is as follows. Part of the ABC transporter complex SsuABC involved in aliphatic sulfonates import. Responsible for energy coupling to the transport system. The sequence is that of Aliphatic sulfonates import ATP-binding protein SsuB from Cupriavidus pinatubonensis (strain JMP 134 / LMG 1197) (Cupriavidus necator (strain JMP 134)).